The sequence spans 360 residues: GTPase Obg (360 aa).

The 156-residue stretch at methionine 1–isoleucine 156 folds into the Obg domain. In terms of domain architecture, OBG-type G spans alanine 157–glutamine 360. GTP contacts are provided by residues glycine 163–serine 170, phenylalanine 188–valine 192, aspartate 210–glycine 213, asparagine 279–aspartate 282, and serine 341–valine 343. Serine 170 and threonine 190 together coordinate Mg(2+).

This sequence belongs to the TRAFAC class OBG-HflX-like GTPase superfamily. OBG GTPase family. Monomer. The cofactor is Mg(2+).

It is found in the cytoplasm. Its function is as follows. An essential GTPase which binds GTP, GDP and possibly (p)ppGpp with moderate affinity, with high nucleotide exchange rates and a fairly low GTP hydrolysis rate. Plays a role in control of the cell cycle, stress response, ribosome biogenesis and in those bacteria that undergo differentiation, in morphogenesis control. This Helicobacter pylori (strain J99 / ATCC 700824) (Campylobacter pylori J99) protein is GTPase Obg.